Consider the following 268-residue polypeptide: Stomatin homolog PYRAB06580 (268 aa).

A helical transmembrane segment spans residues 1–21; that stretch reads MILPTNFFVTTIILLFILIFL. Coiled-coil stretches lie at residues 125–152 and 178–213; these read GQAH…EATD and KQAE…ISEH.

The protein belongs to the band 7/mec-2 family. Homotrimer.

The protein localises to the membrane. This chain is Stomatin homolog PYRAB06580, found in Pyrococcus abyssi (strain GE5 / Orsay).